A 1444-amino-acid chain; its full sequence is MALSQHEMFEKLLDQLDLAADVRQDPSLTSGTVQNVTIHEQSRRYDFTLGFDAILPFQTFNAIATKLPLVFQQIAATDLSVVVTQPTITDELLAQYWQYVVTHAEIGTGIVRELCEKQVPTLENDRAVIKTENEQIRQYLIQQGLGKLEETYRQVGFSGLRMQAEVDEEQAAQSMAAFQAQRAEETAKMAKAAAEVVKQQAAKQKQVQTDGPVQMGRQMKMTDAPQQMVTITQEERSVTVEGYVFDVEVRELRSKRQLLIFKVTDYSSSFIAKKFSNGPEDEAMFARIQKGQWLRVRGSVQEDNYSRELTINAQDIQTVSHPDPTDDAEGEKRVELHLHTNMSQMDAMNPISDYVKRAKEWGHKAIAVTDHAGLQAYPEAHSAAVKAGLKMLYGVEINLVDDGTPVAYRADEPRDLASAEYVVFDVETTGLSAVYDKVIELAAVKMKDGKVIDQFEEMIDPGFPLSELTINLTHITDDMVHGSKSEVDVFKLFQQFCDGAIMVGHNVTFDVGFLDNGYERHGLADIDNPVIDTLELSRMLHPERKNHKLDTLAKQYKVSLEHHHRANADAEATGYLLYALEKEAAKMYGMTTLNQLNDRVGAGDAYKAARPSHAIVFAKTQAGLKNLFKLVSLSNVKYFYRVPRVPRSQLQKLREGLLVGSACSNGEVFTAMMQKGEAEARAKASFYDYLEVQPLPVYQPLIEAGLIKGEAHLKDIIQKIIKIGSELEKPVVATGDAHYLDQHDAIYRQILIHSQGGANPLNRHSLPDVHFRSTSEMLTDFSWLGEEKAHELVVDNSNLIANWVDDDITPVKDKLYTPEVPGVEENLKHDVMTTAHELYGDPLPDIVAQRLDKELKSIIGNGFSVIYNIAQRLVLKSNKDGYLVGSRGSVGSSLAATMAGITEVNPLPPHYRCPNCQYSEFFTHGEIGSGFDLPDKQCPKCGADLHKDGHDIPFETFLGFHGDKVPDIDLNFSGDYQPIAHNYIKVMFGEDHSFRAGTIGTVADKTAYGYVKAYERDTGQQLRGAEIDRLAQGDTGVKRTTGQHPAGILIVPADMDIYDFTPIQYPADDQNAAWMTTHFDFHSIHDNILKMDVLGHDDPTMIRMLQDLSGVEPKSIPTDDPGVMALFSGTKSLGVTPEQINSKMGTLGIPEFGTRFVRGMLEETKPTTFSELLQISGLSHGTDVWLGNAEELIKQGIVTLKEVIGCRDNIMMDLIHWGMEDSMAFNIMEHVRKGRGIPDDWQKAMRENENVPDWYIESCLKIKYMFPKAHATAYILMALRIAWFKVHYPLIYYTAYFSVRAEDFDLAAMSHGKEAVKAAMKEITDKGMDASTKEKQLLTVLEIANECLERGFKIKMIDVTKSDSHNFLIQDDHTILAPFRAVPGLGDNVAKQIVAAREEKPFLSKEDLANRGKVSKTLIDYMTTNHVLDDLPDENQLSLFDGLF.

The Exonuclease domain maps to 421–577 (YVVFDVETTG…ADAEATGYLL (157 aa)).

Belongs to the DNA polymerase type-C family. PolC subfamily.

It is found in the cytoplasm. The enzyme catalyses DNA(n) + a 2'-deoxyribonucleoside 5'-triphosphate = DNA(n+1) + diphosphate. Its function is as follows. Required for replicative DNA synthesis. This DNA polymerase also exhibits 3' to 5' exonuclease activity. The chain is DNA polymerase III PolC-type from Lacticaseibacillus paracasei (strain ATCC 334 / BCRC 17002 / CCUG 31169 / CIP 107868 / KCTC 3260 / NRRL B-441) (Lactobacillus paracasei).